The primary structure comprises 582 residues: Peptidyl-prolyl cis-trans isomerase FKBP10 (582 aa).

Positions 1 to 26 (MFPAGPPSHSLLRLPLLQLLLLVVQA) are cleaved as a signal peptide. 3 consecutive PPIase FKBP-type domains span residues 62-150 (GDFV…LDVW), 174-262 (GDFV…IDVH), and 286-374 (GDFM…IDFH). Residues Asn-70, Asn-182, Asn-294, Asn-310, Asn-352, Asn-393, and Asn-407 are each glycosylated (N-linked (GlcNAc...) asparagine). The region spanning 399–486 (GDFVRYHYNC…LFEVELVSRE (88 aa)) is the PPIase FKBP-type 4 domain. 2 consecutive EF-hand domains span residues 497–532 (WHKDPPANLFEDMDLNKDGEVPPEEFSTFIKAQVSE) and 542–577 (DPEKTIGDMFQNQDRNQDGKITVDELKLKSDEDEER). 10 residues coordinate Ca(2+): Asp-510, Asn-512, Asp-514, Glu-516, Glu-521, Asp-555, Asn-557, Asp-559, Lys-561, and Glu-566. The interval 533–582 (GKGRLMPGQDPEKTIGDMFQNQDRNQDGKITVDELKLKSDEDEERVHEEL) is disordered. The segment covering 556–582 (RNQDGKITVDELKLKSDEDEERVHEEL) has biased composition (basic and acidic residues). The Prevents secretion from ER signature appears at 579 to 582 (HEEL).

Post-translationally, glycosylated and phosphorylated.

It localises to the endoplasmic reticulum lumen. The enzyme catalyses [protein]-peptidylproline (omega=180) = [protein]-peptidylproline (omega=0). With respect to regulation, inhibited by both FK506 and rapamycin, but not by cyclosporin A. In terms of biological role, PPIases accelerate the folding of proteins during protein synthesis. This is Peptidyl-prolyl cis-trans isomerase FKBP10 (FKBP10) from Homo sapiens (Human).